The chain runs to 909 residues: DNA mismatch repair protein MutS (909 aa).

A compositionally biased stretch (basic and acidic residues) spans 275–290 (QKAERPPLSRPEREEQ). A disordered region spans residues 275-295 (QKAERPPLSRPEREEQGSTLF). Residue 661-668 (GPNMGGKS) coordinates ATP.

The protein belongs to the DNA mismatch repair MutS family.

In terms of biological role, this protein is involved in the repair of mismatches in DNA. It is possible that it carries out the mismatch recognition step. This protein has a weak ATPase activity. The chain is DNA mismatch repair protein MutS from Mesorhizobium japonicum (strain LMG 29417 / CECT 9101 / MAFF 303099) (Mesorhizobium loti (strain MAFF 303099)).